The following is a 265-amino-acid chain: UDP-N-acetylenolpyruvoylglucosamine reductase (265 aa).

The 155-residue stretch at 15 to 169 folds into the FAD-binding PCMH-type domain; it reads GVGGPAELWT…TRVRLKLKER (155 aa). Arg149 is an active-site residue. Residues 182 to 203 are disordered; it reads DRARKGQPKRKSAGCAFKNPPG. Cys196 acts as the Proton donor in catalysis.

The protein belongs to the MurB family. Requires FAD as cofactor.

Its subcellular location is the cytoplasm. The catalysed reaction is UDP-N-acetyl-alpha-D-muramate + NADP(+) = UDP-N-acetyl-3-O-(1-carboxyvinyl)-alpha-D-glucosamine + NADPH + H(+). It participates in cell wall biogenesis; peptidoglycan biosynthesis. Functionally, cell wall formation. The protein is UDP-N-acetylenolpyruvoylglucosamine reductase of Thermus thermophilus (strain ATCC BAA-163 / DSM 7039 / HB27).